The following is a 363-amino-acid chain: Dihydroorotate dehydrogenase (quinone) (363 aa).

FMN is bound by residues Ala62–Lys66 and Thr86. Position 66 (Lys66) interacts with substrate. Asn111 to Phe115 serves as a coordination point for substrate. Asn140 and Asn171 together coordinate FMN. Substrate is bound at residue Asn171. Catalysis depends on Ser174, which acts as the Nucleophile. A substrate-binding site is contributed by Asn176. 2 residues coordinate FMN: Lys216 and Ser244. Asn245–Thr246 provides a ligand contact to substrate. FMN contacts are provided by residues Gly267, Gly296, and Tyr317–Ser318.

This sequence belongs to the dihydroorotate dehydrogenase family. Type 2 subfamily. In terms of assembly, monomer. FMN serves as cofactor.

Its subcellular location is the cell membrane. The catalysed reaction is (S)-dihydroorotate + a quinone = orotate + a quinol. Its pathway is pyrimidine metabolism; UMP biosynthesis via de novo pathway; orotate from (S)-dihydroorotate (quinone route): step 1/1. Its function is as follows. Catalyzes the conversion of dihydroorotate to orotate with quinone as electron acceptor. This is Dihydroorotate dehydrogenase (quinone) from Allorhizobium ampelinum (strain ATCC BAA-846 / DSM 112012 / S4) (Agrobacterium vitis (strain S4)).